Here is a 222-residue protein sequence, read N- to C-terminus: 2-C-methyl-D-erythritol 4-phosphate cytidylyltransferase (222 aa).

The protein belongs to the IspD/TarI cytidylyltransferase family. IspD subfamily.

It carries out the reaction 2-C-methyl-D-erythritol 4-phosphate + CTP + H(+) = 4-CDP-2-C-methyl-D-erythritol + diphosphate. The protein operates within isoprenoid biosynthesis; isopentenyl diphosphate biosynthesis via DXP pathway; isopentenyl diphosphate from 1-deoxy-D-xylulose 5-phosphate: step 2/6. Catalyzes the formation of 4-diphosphocytidyl-2-C-methyl-D-erythritol from CTP and 2-C-methyl-D-erythritol 4-phosphate (MEP). This Thermotoga sp. (strain RQ2) protein is 2-C-methyl-D-erythritol 4-phosphate cytidylyltransferase.